The chain runs to 549 residues: Sphingosine-1-phosphate transporter SPNS2 (549 aa).

2 disordered regions span residues 14 to 36 and 78 to 97; these read AEEEEADAERRRRRRGAQPGAGG and PGCAAAAKGPSAPQPKPASL. A run of 11 helical transmembrane segments spans residues 141 to 161, 169 to 189, 202 to 222, 229 to 249, 261 to 281, 320 to 340, 364 to 384, 398 to 418, 422 to 442, 466 to 486, and 507 to 527; these read GLLQSVFICSFMVAAPIFGYL, VILSCGIFFWSAVTFSSSFIP, LVGIGEASYSTIAPTIIGDLF, LMLSVFYFAIPLGSGLGYITG, WALRVSPVLGMITGTLILILV, LATSAVSFATGALGMWIPLYL, LIFGAITCFTGFLGVVTGAGA, LVCAVGMLGSAIFICLIFVAA, IVGAYICIFVGETLLFSNWAI, TSHLLGDAGSPYLIGFISDLI, and LCPFVVVLGGMFFLATALFFL.

The protein belongs to the major facilitator superfamily. Spinster (TC 2.A.1.49) family. In terms of tissue distribution, expression is high in the lungs and liver, low in the lymph nodes, spleen and bone marrow, and very low but detectable in the thymus. Not expressed in red blood cells. Also expressed in the inner ear: expressed in the cochlea, both in the lateral wall and organ of Corti.

Its subcellular location is the cell membrane. The protein resides in the endosome membrane. The enzyme catalyses sphing-4-enine 1-phosphate(in) = sphing-4-enine 1-phosphate(out). It carries out the reaction sphinganine 1-phosphate(in) = sphinganine 1-phosphate(out). Its function is as follows. Lipid transporter that specifically mediates export of sphingosine-1-phosphate (sphing-4-enine 1-phosphate, S1P) and sphinganine-1-phosphate in the lymph, thereby playing a role in lymphocyte trafficking. S1P is a bioactive signaling molecule that regulates many physiological processes important for the development and for the immune system. Regulates levels of S1P and the S1P gradient that exists between the high circulating concentrations of S1P and low tissue levels that control lymphocyte trafficking. Required for the egress of T-cells from lymph nodes during an immune response by mediating S1P secretion, which generates a gradient that enables activated T-cells to access lymph. Also required for the egress of immature B-cells from the bone marrow. In contrast, it does not mediate S1P release from red blood cells. Involved in auditory function: S1P release in the inner ear is required for maintenance of the endocochlear potential in the cochlea. In addition to export, also able to mediate S1P import. The chain is Sphingosine-1-phosphate transporter SPNS2 from Mus musculus (Mouse).